The sequence spans 849 residues: Membrane protein-large ribosomal subunit bL9 fusion protein (849 aa).

Residues 1–680 (MFSKNKHNTK…TQLEGTNIKT (680 aa)) are unknown. Helical transmembrane passes span 11-31 (FIVIACVIVVLILILFCFDFQ) and 64-84 (IIFFIFNFFGKIILASFIISF). The region spanning 214 to 342 (KTLAIAMIAF…GGDQVVVNIE (129 aa)) is the GGDEF domain. The large ribosomal subunit protein bL9 stretch occupies residues 681–849 (VTDTLKHFLK…FLNVTERKSK (169 aa)).

The protein belongs to the bacterial ribosomal protein bL9 family.

Its subcellular location is the cell membrane. Functionally, binds to the 23S rRNA. The protein is Membrane protein-large ribosomal subunit bL9 fusion protein of Aster yellows witches'-broom phytoplasma (strain AYWB).